Reading from the N-terminus, the 126-residue chain is Large ribosomal subunit protein bL12 (126 aa).

The protein belongs to the bacterial ribosomal protein bL12 family. In terms of assembly, homodimer. Part of the ribosomal stalk of the 50S ribosomal subunit. Forms a multimeric L10(L12)X complex, where L10 forms an elongated spine to which 2 to 4 L12 dimers bind in a sequential fashion. Binds GTP-bound translation factors.

Functionally, forms part of the ribosomal stalk which helps the ribosome interact with GTP-bound translation factors. Is thus essential for accurate translation. In Methylobacterium nodulans (strain LMG 21967 / CNCM I-2342 / ORS 2060), this protein is Large ribosomal subunit protein bL12.